A 490-amino-acid polypeptide reads, in one-letter code: Cytochrome P450 2C2 (490 aa).

Cysteine 435 contributes to the heme binding site.

It belongs to the cytochrome P450 family. It depends on heme as a cofactor.

The protein resides in the endoplasmic reticulum membrane. It localises to the microsome membrane. The catalysed reaction is an organic molecule + reduced [NADPH--hemoprotein reductase] + O2 = an alcohol + oxidized [NADPH--hemoprotein reductase] + H2O + H(+). Cytochromes P450 are a group of heme-thiolate monooxygenases. In liver microsomes, this enzyme is involved in an NADPH-dependent electron transport pathway. It oxidizes a variety of structurally unrelated compounds, including steroids, fatty acids, and xenobiotics. In the epoxidation of arachidonic acid it generates only 14,15- and 11,12-cis-epoxyeicosatrienoic acids. In Oryctolagus cuniculus (Rabbit), this protein is Cytochrome P450 2C2 (CYP2C2).